The chain runs to 1014 residues: Beta-galactosidase (1014 aa).

The Proton donor role is filled by Glu460. The Nucleophile role is filled by Glu527.

The protein belongs to the glycosyl hydrolase 2 family.

It carries out the reaction Hydrolysis of terminal non-reducing beta-D-galactose residues in beta-D-galactosides.. This Halalkalibacterium halodurans (strain ATCC BAA-125 / DSM 18197 / FERM 7344 / JCM 9153 / C-125) (Bacillus halodurans) protein is Beta-galactosidase (lacZ).